Consider the following 111-residue polypeptide: Cell cycle protein GpsB (111 aa).

The stretch at 32-63 (LDDIMKDYDAYEAIIKELKGEIARLKAQAANS) forms a coiled coil. The interval 59–80 (QAANSPKTTLPTEESNDVLRTE) is disordered. Residues 60–71 (AANSPKTTLPTE) show a composition bias toward polar residues.

This sequence belongs to the GpsB family. In terms of assembly, forms polymers through the coiled coil domains. Interacts with PBP1, MreC and EzrA.

The protein resides in the cytoplasm. Its function is as follows. Divisome component that associates with the complex late in its assembly, after the Z-ring is formed, and is dependent on DivIC and PBP2B for its recruitment to the divisome. Together with EzrA, is a key component of the system that regulates PBP1 localization during cell cycle progression. Its main role could be the removal of PBP1 from the cell pole after pole maturation is completed. Also contributes to the recruitment of PBP1 to the division complex. Not essential for septum formation. This chain is Cell cycle protein GpsB, found in Streptococcus suis (strain 98HAH33).